We begin with the raw amino-acid sequence, 144 residues long: Large ribosomal subunit protein uL11 (144 aa).

The protein belongs to the universal ribosomal protein uL11 family. In terms of assembly, part of the ribosomal stalk of the 50S ribosomal subunit. Interacts with L10 and the large rRNA to form the base of the stalk. L10 forms an elongated spine to which L12 dimers bind in a sequential fashion forming a multimeric L10(L12)X complex. Post-translationally, one or more lysine residues are methylated.

Forms part of the ribosomal stalk which helps the ribosome interact with GTP-bound translation factors. The chain is Large ribosomal subunit protein uL11 from Rhodococcus erythropolis (strain PR4 / NBRC 100887).